A 494-amino-acid polypeptide reads, in one-letter code: Glycerol kinase (494 aa).

T13 provides a ligand contact to ADP. ATP is bound by residues T13, T14, and S15. T13 is a binding site for sn-glycerol 3-phosphate. R17 lines the ADP pocket. Sn-glycerol 3-phosphate contacts are provided by R83, E84, Y135, and D244. Residues R83, E84, Y135, D244, and Q245 each coordinate glycerol. ADP-binding residues include T266 and G309. The ATP site is built by T266, G309, Q313, and G410. Residues G410 and N414 each contribute to the ADP site.

Belongs to the FGGY kinase family.

It catalyses the reaction glycerol + ATP = sn-glycerol 3-phosphate + ADP + H(+). The protein operates within polyol metabolism; glycerol degradation via glycerol kinase pathway; sn-glycerol 3-phosphate from glycerol: step 1/1. With respect to regulation, inhibited by fructose 1,6-bisphosphate (FBP). Key enzyme in the regulation of glycerol uptake and metabolism. Catalyzes the phosphorylation of glycerol to yield sn-glycerol 3-phosphate. This Shewanella putrefaciens (strain CN-32 / ATCC BAA-453) protein is Glycerol kinase.